The primary structure comprises 396 residues: MKKYNRIFTIVIDSLGIGEMSDSKEYGDVNVDTLRHISESVDEFKIPNLQKLGLANLHPIKHVEAVEKPLAHFMKMREASVGKDTMTGHWEMMGLKIETPFQTFTDTGFPQELLDELEKRTGHKIVGNKSASGTEILDELGEHQIKTGDMIVYTSADSVLQICGHEETFGLDELYRCCEIARELTLKDEWKVGRVIARPYLGMKKGEFKRTSNRHDYALKPYGATALNALKDNGFASISVGKINDIFDGEGITESNKSKSSVHGMEQTLEIMDKEFKGSCFVNLVDFDALWGHRRNPVGYAEELEKFDVNLGKVLDKLKEDDLLIITADHGNDPTYKGTDHTREHVPFLAYSPSMTESGLMETSDSFAAIGATIAENFGVKMPENTIGESVLSKLV.

The Mn(2+) site is built by D13, D288, H293, D329, H330, and H341.

Belongs to the phosphopentomutase family. The cofactor is Mn(2+).

Its subcellular location is the cytoplasm. It carries out the reaction 2-deoxy-alpha-D-ribose 1-phosphate = 2-deoxy-D-ribose 5-phosphate. The catalysed reaction is alpha-D-ribose 1-phosphate = D-ribose 5-phosphate. It participates in carbohydrate degradation; 2-deoxy-D-ribose 1-phosphate degradation; D-glyceraldehyde 3-phosphate and acetaldehyde from 2-deoxy-alpha-D-ribose 1-phosphate: step 1/2. Isomerase that catalyzes the conversion of deoxy-ribose 1-phosphate (dRib-1-P) and ribose 1-phosphate (Rib-1-P) to deoxy-ribose 5-phosphate (dRib-5-P) and ribose 5-phosphate (Rib-5-P), respectively. This is Phosphopentomutase from Clostridium beijerinckii (strain ATCC 51743 / NCIMB 8052) (Clostridium acetobutylicum).